Reading from the N-terminus, the 125-residue chain is Salivary protein 15 Ipac-1 (125 aa).

The first 15 residues, 1-15, serve as a signal peptide directing secretion; the sequence is MKVVCIILLFGIAAA. 2 N-linked (GlcNAc...) asparagine glycosylation sites follow: N82 and N94. The CD4-binding stretch occupies residues 106–125; it reads GPSGQTCADKSKCVGHIPGC.

This sequence belongs to the salp15 family. As to quaternary structure, interacts with host CD4. Interacts with host DC-SIGN (CD209). Interacts with Borrelia outer surface protein C (OspC). As to expression, expressed in salivary glands.

The protein resides in the secreted. In terms of biological role, salivary tick protein that downregulates host immune system by binding to both dendritic cells, and CD4(+) T cells. Specifically binds to the CD4 coreceptor on T cells. This interaction prevents the activation of the Src kinase, Lck, and its downstream substrate Zap-70, and results in deficient activation of PLCgamma1, the repression of calcium fluxes triggered by T-cell antigen receptor (TCR) ligation, and a subsequent reduction in interleukin-2 production. This salivary protein also binds to DC-SIGN (CD209) on dendritic cells (DC) and activates the Raf-1 kinase/MEK signaling pathway that results in down-regulating expression of pro-inflammatory cytokines. Furthermore, it inhibits T cell proliferation induced by DCs. It also inhibits in vitro keratinocyte inflammation induced by Borrelia burgdorferi or by the major outer surface protein (OspC) of Borrelia. In addition, it downregulates chemokines and monocyte chemoattractant protein 1, as well as several antimicrobial peptides such as defensins, cathelicidin, psoriasin, and RNase 7. Apart from its immunomodulatory activities, it is also associated with protection of Borrelia spirochetes from antibody-mediated killing through its binding to OspC. In vivo, tests on different immune disease animal models show promising therapeutic results, e.g., in inhibiting HIV infection, experimental autoimmune encephalomyelitis, transplantation rejection, and asthma. This chain is Salivary protein 15 Ipac-1, found in Ixodes pacificus (Western black-legged tick).